Consider the following 360-residue polypeptide: Mannose-1-phosphate guanylyltransferase catalytic subunit beta (360 aa).

Residues 2 to 222 are substrate-binding domain; it reads KALILVGGYG…QGFWMDIGQP (221 aa). Asp110 lines the GDP-alpha-D-mannose pocket. Mg(2+) is bound at residue Asp110. Lys162 is an active-site residue. Asp218 provides a ligand contact to GDP-alpha-D-mannose. Asp218 contacts Mg(2+). The hexapeptide repeat domain stretch occupies residues 245–360; sequence CSGPGIVGNV…ESVPEPRIIM (116 aa).

It belongs to the transferase hexapeptide repeat family. Component of the GMPPA-GMPPB mannose-1-phosphate guanylyltransferase complex composed of 4 GMPPA subunits and 8 GMPPB subunits; the complex is organized into three layers, a central layer made up of 2 GMPPA dimers sandwiched between two layers each made up of 2 GMPPB dimers. GMPPB catalytic activity is reduced when part of the complex and binding of GDP-alpha-D-Mannose by GMPPA induces allosteric feedback inhibition of GMPPB. Mg(2+) is required as a cofactor. As to expression, ubiquitously expressed, including in brain and skeletal muscle. In terms of tissue distribution, weakly expressed with highest expression in skeletal muscle, brain and gonads.

It is found in the cytoplasm. It carries out the reaction alpha-D-mannose 1-phosphate + GTP + H(+) = GDP-alpha-D-mannose + diphosphate. It functions in the pathway nucleotide-sugar biosynthesis; GDP-alpha-D-mannose biosynthesis; GDP-alpha-D-mannose from alpha-D-mannose 1-phosphate (GTP route): step 1/1. With respect to regulation, enzyme activity is reduced by incorporation into the GMPPA-GMPPB mannose-1-phosphate guanylyltransferase complex. Allosterically inhibited, when part of the GMPPA-GMPPB complex, by GDP-alpha-D-mannose binding to GMPPA. Its function is as follows. Catalytic subunit of the GMPPA-GMPPB mannose-1-phosphate guanylyltransferase complex. Catalyzes the formation of GDP-mannose, an essential precursor of glycan moieties of glycoproteins and glycolipids. Can catalyze the reverse reaction in vitro. Together with GMPPA regulates GDP-alpha-D-mannose levels. This is Mannose-1-phosphate guanylyltransferase catalytic subunit beta from Homo sapiens (Human).